The primary structure comprises 325 residues: Lipoyl synthase (325 aa).

The disordered stretch occupies residues 1–31 (MANLIDNTARSAASDARAARHPEKQKRADTP). Basic and acidic residues predominate over residues 17–31 (RAARHPEKQKRADTP). The [4Fe-4S] cluster site is built by cysteine 65, cysteine 70, cysteine 76, cysteine 91, cysteine 95, cysteine 98, and serine 304. The region spanning 77-293 (WEQKHATFMI…ETIARAKGFL (217 aa)) is the Radical SAM core domain.

It belongs to the radical SAM superfamily. Lipoyl synthase family. It depends on [4Fe-4S] cluster as a cofactor.

It is found in the cytoplasm. The enzyme catalyses [[Fe-S] cluster scaffold protein carrying a second [4Fe-4S](2+) cluster] + N(6)-octanoyl-L-lysyl-[protein] + 2 oxidized [2Fe-2S]-[ferredoxin] + 2 S-adenosyl-L-methionine + 4 H(+) = [[Fe-S] cluster scaffold protein] + N(6)-[(R)-dihydrolipoyl]-L-lysyl-[protein] + 4 Fe(3+) + 2 hydrogen sulfide + 2 5'-deoxyadenosine + 2 L-methionine + 2 reduced [2Fe-2S]-[ferredoxin]. It participates in protein modification; protein lipoylation via endogenous pathway; protein N(6)-(lipoyl)lysine from octanoyl-[acyl-carrier-protein]: step 2/2. Its function is as follows. Catalyzes the radical-mediated insertion of two sulfur atoms into the C-6 and C-8 positions of the octanoyl moiety bound to the lipoyl domains of lipoate-dependent enzymes, thereby converting the octanoylated domains into lipoylated derivatives. The protein is Lipoyl synthase of Maricaulis maris (strain MCS10) (Caulobacter maris).